The primary structure comprises 362 residues: Probable dual-specificity RNA methyltransferase RlmN (362 aa).

Glu105 acts as the Proton acceptor in catalysis. Positions 111–344 constitute a Radical SAM core domain; the sequence is HNYGNSVCVT…VTIRREQGHD (234 aa). Cys118 and Cys349 form a disulfide bridge. The [4Fe-4S] cluster site is built by Cys125, Cys129, and Cys132. Residues 175–176, Ser207, 230–232, and Asn306 contribute to the S-adenosyl-L-methionine site; these read GE and SLH. The active-site S-methylcysteine intermediate is the Cys349.

It belongs to the radical SAM superfamily. RlmN family. The cofactor is [4Fe-4S] cluster.

The protein localises to the cytoplasm. It carries out the reaction adenosine(2503) in 23S rRNA + 2 reduced [2Fe-2S]-[ferredoxin] + 2 S-adenosyl-L-methionine = 2-methyladenosine(2503) in 23S rRNA + 5'-deoxyadenosine + L-methionine + 2 oxidized [2Fe-2S]-[ferredoxin] + S-adenosyl-L-homocysteine. It catalyses the reaction adenosine(37) in tRNA + 2 reduced [2Fe-2S]-[ferredoxin] + 2 S-adenosyl-L-methionine = 2-methyladenosine(37) in tRNA + 5'-deoxyadenosine + L-methionine + 2 oxidized [2Fe-2S]-[ferredoxin] + S-adenosyl-L-homocysteine. Its function is as follows. Specifically methylates position 2 of adenine 2503 in 23S rRNA and position 2 of adenine 37 in tRNAs. This chain is Probable dual-specificity RNA methyltransferase RlmN, found in Halalkalibacterium halodurans (strain ATCC BAA-125 / DSM 18197 / FERM 7344 / JCM 9153 / C-125) (Bacillus halodurans).